A 357-amino-acid polypeptide reads, in one-letter code: UDP-N-acetylglucosamine--N-acetylmuramyl-(pentapeptide) pyrophosphoryl-undecaprenol N-acetylglucosamine transferase (357 aa).

Residues T15–G17, N124, R165, S194, and Q288 contribute to the UDP-N-acetyl-alpha-D-glucosamine site.

It belongs to the glycosyltransferase 28 family. MurG subfamily.

It localises to the cell inner membrane. It catalyses the reaction di-trans,octa-cis-undecaprenyl diphospho-N-acetyl-alpha-D-muramoyl-L-alanyl-D-glutamyl-meso-2,6-diaminopimeloyl-D-alanyl-D-alanine + UDP-N-acetyl-alpha-D-glucosamine = di-trans,octa-cis-undecaprenyl diphospho-[N-acetyl-alpha-D-glucosaminyl-(1-&gt;4)]-N-acetyl-alpha-D-muramoyl-L-alanyl-D-glutamyl-meso-2,6-diaminopimeloyl-D-alanyl-D-alanine + UDP + H(+). It participates in cell wall biogenesis; peptidoglycan biosynthesis. In terms of biological role, cell wall formation. Catalyzes the transfer of a GlcNAc subunit on undecaprenyl-pyrophosphoryl-MurNAc-pentapeptide (lipid intermediate I) to form undecaprenyl-pyrophosphoryl-MurNAc-(pentapeptide)GlcNAc (lipid intermediate II). The sequence is that of UDP-N-acetylglucosamine--N-acetylmuramyl-(pentapeptide) pyrophosphoryl-undecaprenol N-acetylglucosamine transferase from Nostoc punctiforme (strain ATCC 29133 / PCC 73102).